Reading from the N-terminus, the 479-residue chain is UDP-N-acetylmuramate--L-alanine ligase (479 aa).

114–120 (GTHGKTT) is a binding site for ATP.

Belongs to the MurCDEF family.

It localises to the cytoplasm. The enzyme catalyses UDP-N-acetyl-alpha-D-muramate + L-alanine + ATP = UDP-N-acetyl-alpha-D-muramoyl-L-alanine + ADP + phosphate + H(+). Its pathway is cell wall biogenesis; peptidoglycan biosynthesis. Functionally, cell wall formation. This Pelodictyon phaeoclathratiforme (strain DSM 5477 / BU-1) protein is UDP-N-acetylmuramate--L-alanine ligase.